A 169-amino-acid chain; its full sequence is Cell division inhibitor SulA (169 aa).

The disordered stretch occupies residues 1–22; that stretch reads MHTSIYANRSTSFSPSAGNDTQ. A ftsZ binding region spans residues 106 to 112; the sequence is ALRTGNY. The lon protease binding stretch occupies residues 162–169; that stretch reads KIHSNLYH.

It belongs to the SulA family. In terms of assembly, interacts with FtsZ. In terms of processing, is rapidly cleaved and degraded by the Lon protease once DNA damage is repaired.

Its function is as follows. Component of the SOS system and an inhibitor of cell division. Accumulation of SulA causes rapid cessation of cell division and the appearance of long, non-septate filaments. In the presence of GTP, binds a polymerization-competent form of FtsZ in a 1:1 ratio, thus inhibiting FtsZ polymerization and therefore preventing it from participating in the assembly of the Z ring. This mechanism prevents the premature segregation of damaged DNA to daughter cells during cell division. The protein is Cell division inhibitor SulA of Enterobacter sp. (strain 638).